The sequence spans 308 residues: Aspartate carbamoyltransferase catalytic subunit (308 aa).

Arg-55 and Thr-56 together coordinate carbamoyl phosphate. Residue Lys-83 participates in L-aspartate binding. Positions 105, 133, and 136 each coordinate carbamoyl phosphate. L-aspartate-binding residues include Arg-166 and Arg-220. Carbamoyl phosphate is bound by residues Gly-261 and Pro-262.

The protein belongs to the aspartate/ornithine carbamoyltransferase superfamily. ATCase family. As to quaternary structure, heterododecamer (2C3:3R2) of six catalytic PyrB chains organized as two trimers (C3), and six regulatory PyrI chains organized as three dimers (R2).

The enzyme catalyses carbamoyl phosphate + L-aspartate = N-carbamoyl-L-aspartate + phosphate + H(+). It participates in pyrimidine metabolism; UMP biosynthesis via de novo pathway; (S)-dihydroorotate from bicarbonate: step 2/3. In terms of biological role, catalyzes the condensation of carbamoyl phosphate and aspartate to form carbamoyl aspartate and inorganic phosphate, the committed step in the de novo pyrimidine nucleotide biosynthesis pathway. The sequence is that of Aspartate carbamoyltransferase catalytic subunit from Chlorobaculum parvum (strain DSM 263 / NCIMB 8327) (Chlorobium vibrioforme subsp. thiosulfatophilum).